The following is a 131-amino-acid chain: Agouti-signaling protein (131 aa).

The signal sequence occupies residues 1–22 (MDVTRLLLATLVGFLCFFTVHS). The N-linked (GlcNAc...) asparagine glycan is linked to asparagine 39. A disordered region spans residues 58 to 100 (KSKKISRKEAEKRKRSSKKKASMKKVARPPPPSPCVATRDSCK). The segment covering 70–84 (RKRSSKKKASMKKVA) has biased composition (basic residues). 5 disulfides stabilise this stretch: cysteine 92–cysteine 107, cysteine 99–cysteine 113, cysteine 106–cysteine 124, cysteine 110–cysteine 131, and cysteine 115–cysteine 122. The 40-residue stretch at 92-131 (CVATRDSCKPPAPACCDPCASCQCRFFGSACTCRVLNPNC) folds into the Agouti domain.

As to expression, epithelial cells of the hair follicles and the epidermis.

The protein resides in the secreted. Its function is as follows. Involved in the regulation of melanogenesis. The binding of ASP to MC1R precludes alpha-MSH initiated signaling and thus blocks production of cAMP, leading to a down-regulation of eumelanogenesis (brown/black pigment) and thus increasing synthesis of pheomelanin (yellow/red pigment). Causes hair follicle melanocytes to synthesize phaeomelanin instead of black or brown pigment eumelanin and produces hairs with a subapical yellow band on an otherwise black or brown background when expressed during the mid-portion of hair growth. The protein is Agouti-signaling protein (Asip) of Mus musculus (Mouse).